The primary structure comprises 251 residues: NADPH-dependent oxidoreductase (251 aa).

The protein belongs to the flavin oxidoreductase frp family. FMN is required as a cofactor.

In terms of biological role, reduces FMN, organic nitro compounds and disulfide DTNB. Involved in maintenance of the cellular redox state and the disulfide stress response. The sequence is that of NADPH-dependent oxidoreductase (nfrA) from Staphylococcus aureus (strain MRSA252).